The following is a 216-amino-acid chain: ATP phosphoribosyltransferase (216 aa).

The protein belongs to the ATP phosphoribosyltransferase family. Short subfamily. As to quaternary structure, heteromultimer composed of HisG and HisZ subunits.

The protein localises to the cytoplasm. The catalysed reaction is 1-(5-phospho-beta-D-ribosyl)-ATP + diphosphate = 5-phospho-alpha-D-ribose 1-diphosphate + ATP. It functions in the pathway amino-acid biosynthesis; L-histidine biosynthesis; L-histidine from 5-phospho-alpha-D-ribose 1-diphosphate: step 1/9. In terms of biological role, catalyzes the condensation of ATP and 5-phosphoribose 1-diphosphate to form N'-(5'-phosphoribosyl)-ATP (PR-ATP). Has a crucial role in the pathway because the rate of histidine biosynthesis seems to be controlled primarily by regulation of HisG enzymatic activity. This Synechococcus sp. (strain CC9902) protein is ATP phosphoribosyltransferase.